Reading from the N-terminus, the 592-residue chain is Aspartate--tRNA(Asp/Asn) ligase (592 aa).

Glutamate 176 provides a ligand contact to L-aspartate. The segment at 200–203 (QLYK) is aspartate. Arginine 222 provides a ligand contact to L-aspartate. ATP is bound by residues 222–224 (RDE) and glutamine 231. L-aspartate is bound at residue histidine 452. Glutamate 486 is a binding site for ATP. Position 493 (arginine 493) interacts with L-aspartate. ATP is bound at residue 538–541 (GVDR).

It belongs to the class-II aminoacyl-tRNA synthetase family. Type 1 subfamily. As to quaternary structure, homodimer.

Its subcellular location is the cytoplasm. It catalyses the reaction tRNA(Asx) + L-aspartate + ATP = L-aspartyl-tRNA(Asx) + AMP + diphosphate. In terms of biological role, aspartyl-tRNA synthetase with relaxed tRNA specificity since it is able to aspartylate not only its cognate tRNA(Asp) but also tRNA(Asn). Reaction proceeds in two steps: L-aspartate is first activated by ATP to form Asp-AMP and then transferred to the acceptor end of tRNA(Asp/Asn). This is Aspartate--tRNA(Asp/Asn) ligase from Rhodopirellula baltica (strain DSM 10527 / NCIMB 13988 / SH1).